The primary structure comprises 716 residues: Fatty acid oxidation complex subunit alpha (716 aa).

The enoyl-CoA hydratase/isomerase stretch occupies residues 1–189 (MIYQSPTIQV…KVGAIDAVVA (189 aa)). Asp-296 is a substrate binding site. A 3-hydroxyacyl-CoA dehydrogenase region spans residues 311–716 (KDVNQAAVLG…AANNGSYYQA (406 aa)). NAD(+)-binding positions include Met-324, Asp-343, 400 to 402 (VVE), Lys-407, and Ser-429. Residue His-450 is the For 3-hydroxyacyl-CoA dehydrogenase activity of the active site. Asn-453 is a binding site for NAD(+). Residues Asn-500 and Tyr-660 each contribute to the substrate site.

It in the N-terminal section; belongs to the enoyl-CoA hydratase/isomerase family. This sequence in the C-terminal section; belongs to the 3-hydroxyacyl-CoA dehydrogenase family. As to quaternary structure, heterotetramer of two alpha chains (FadB) and two beta chains (FadA).

The enzyme catalyses a (3S)-3-hydroxyacyl-CoA + NAD(+) = a 3-oxoacyl-CoA + NADH + H(+). It catalyses the reaction a (3S)-3-hydroxyacyl-CoA = a (2E)-enoyl-CoA + H2O. The catalysed reaction is a 4-saturated-(3S)-3-hydroxyacyl-CoA = a (3E)-enoyl-CoA + H2O. It carries out the reaction (3S)-3-hydroxybutanoyl-CoA = (3R)-3-hydroxybutanoyl-CoA. The enzyme catalyses a (3Z)-enoyl-CoA = a 4-saturated (2E)-enoyl-CoA. It catalyses the reaction a (3E)-enoyl-CoA = a 4-saturated (2E)-enoyl-CoA. It functions in the pathway lipid metabolism; fatty acid beta-oxidation. Its function is as follows. Involved in the aerobic and anaerobic degradation of long-chain fatty acids via beta-oxidation cycle. Catalyzes the formation of 3-oxoacyl-CoA from enoyl-CoA via L-3-hydroxyacyl-CoA. It can also use D-3-hydroxyacyl-CoA and cis-3-enoyl-CoA as substrate. The protein is Fatty acid oxidation complex subunit alpha of Shewanella frigidimarina (strain NCIMB 400).